Here is a 251-residue protein sequence, read N- to C-terminus: tRNA pseudouridine synthase A 1 (251 aa).

The active-site Nucleophile is Asp-52. Position 110 (Tyr-110) interacts with substrate.

The protein belongs to the tRNA pseudouridine synthase TruA family. Homodimer.

It catalyses the reaction uridine(38/39/40) in tRNA = pseudouridine(38/39/40) in tRNA. In terms of biological role, formation of pseudouridine at positions 38, 39 and 40 in the anticodon stem and loop of transfer RNAs. In Desulfotalea psychrophila (strain LSv54 / DSM 12343), this protein is tRNA pseudouridine synthase A 1.